The primary structure comprises 637 residues: CREB-regulated transcription coactivator 3 (637 aa).

Phosphoserine is present on Ser66. Basic residues predominate over residues 105 to 115; sequence NRLHSSHHRPI. Disordered regions lie at residues 105–184 and 269–288; these read NRLH…SLQD and HFPS…YANI. A Phosphoserine modification is found at Ser133. Thr143 carries the phosphothreonine modification. Phosphoserine; by SIK2 is present on Ser145. The segment covering 145–159 has biased composition (polar residues); that stretch reads SDSALHTSASSTKSQ. At Thr151 the chain carries Phosphothreonine. Ser293 carries the phosphoserine modification. Residues 299-462 are disordered; it reads AMTHLGISGS…QNYQPPSPVP (164 aa). Residues 309-337 show a composition bias toward polar residues; it reads PGMQNTRSNPSIQATMNNNSLASNVNSHT. A compositionally biased stretch (low complexity) spans 344–365; that stretch reads PALHPSLRLSSLSNPSLPTSAL. A phosphoserine mark is found at Ser377 and Ser396. The segment covering 377–395 has biased composition (polar residues); that stretch reads SPLTLTPGSESNRSISNQF. A compositionally biased stretch (low complexity) spans 396–407; it reads SPTSPMNMPPNS. A compositionally biased stretch (pro residues) spans 418–429; sequence SLPPLEPPPPYP. Residues 430–447 are compositionally biased toward low complexity; it reads LYSDQPQPHLHHTQQQMH. The residue at position 561 (Ser561) is a Phosphoserine. The interval 615 to 637 is disordered; it reads MLSDPDMVLPDPSIEDSFRSDKL.

The protein belongs to the TORC family. In terms of assembly, binding, as a tetramer, through its N-terminal region, with the bZIP domain of creb1 enhances recruitment of taf4 to the promoter. 'Arg-300' in the bZIP domain of creb1 is essential for this interaction.

It localises to the nucleus. The protein localises to the cytoplasm. Functionally, transcriptional coactivator for creb1 which activates transcription through both consensus and variant cAMP response element (CRE) sites. Acts as a coactivator, in the SIK/TORC signaling pathway, being active when dephosphorylated and acts independently of creb1 'Ser-119' phosphorylation. Enhances the interaction of creb1 with taf4. Regulates the expression of specific CREB-activated genes such as the steroidogenic gene, StAR. Potent coactivator of ppargc1a and inducer of mitochondrial biogenesis in muscle cells. The sequence is that of CREB-regulated transcription coactivator 3 (crtc3) from Xenopus tropicalis (Western clawed frog).